The chain runs to 274 residues: NADPH-dependent 7-cyano-7-deazaguanine reductase (274 aa).

80–82 is a substrate binding site; that stretch reads VES. 82 to 83 contacts NADPH; sequence SK. Cys-181 (thioimide intermediate) is an active-site residue. Asp-188 serves as the catalytic Proton donor. A substrate-binding site is contributed by 220–221; sequence HE. Residue 249 to 250 participates in NADPH binding; sequence RG.

Belongs to the GTP cyclohydrolase I family. QueF type 2 subfamily. Homodimer.

It is found in the cytoplasm. The catalysed reaction is 7-aminomethyl-7-carbaguanine + 2 NADP(+) = 7-cyano-7-deazaguanine + 2 NADPH + 3 H(+). Its pathway is tRNA modification; tRNA-queuosine biosynthesis. Catalyzes the NADPH-dependent reduction of 7-cyano-7-deazaguanine (preQ0) to 7-aminomethyl-7-deazaguanine (preQ1). The chain is NADPH-dependent 7-cyano-7-deazaguanine reductase from Paraburkholderia phymatum (strain DSM 17167 / CIP 108236 / LMG 21445 / STM815) (Burkholderia phymatum).